Here is a 192-residue protein sequence, read N- to C-terminus: MGTIKSGDIEKGTFLLFKGMPHIVLEREFSKMGRGGSIVRLKLKNLKNKSVVKETLKGADTVEEIEVLEVASQYLYRENENLIFMDLETYDQFDVNLREISNIEDKVMFLQEAGIYSLVKWDNEVIDLRLPPKVAFEVVDAEIAVKGDTVTNAMKNVTLHTGLVVKAPLFINVGDKILVNSETKEYAERVKE.

It belongs to the elongation factor P family.

The protein resides in the cytoplasm. It functions in the pathway protein biosynthesis; polypeptide chain elongation. In terms of biological role, involved in peptide bond synthesis. Stimulates efficient translation and peptide-bond synthesis on native or reconstituted 70S ribosomes in vitro. Probably functions indirectly by altering the affinity of the ribosome for aminoacyl-tRNA, thus increasing their reactivity as acceptors for peptidyl transferase. In Borrelia turicatae (strain 91E135), this protein is Elongation factor P.